The primary structure comprises 49 residues: Large ribosomal subunit protein bL33 (49 aa).

It belongs to the bacterial ribosomal protein bL33 family.

The sequence is that of Large ribosomal subunit protein bL33 from Nitratidesulfovibrio vulgaris (strain ATCC 29579 / DSM 644 / CCUG 34227 / NCIMB 8303 / VKM B-1760 / Hildenborough) (Desulfovibrio vulgaris).